A 70-amino-acid polypeptide reads, in one-letter code: Conotoxin Cl9.1 (70 aa).

An N-terminal signal peptide occupies residues 1-20 (MMGKLGVVLFICLVLFPLET). The propeptide occupies 21-50 (LQLEGGQQADRHVDQLEGNPNRETRTIEVR). 3 cysteine pairs are disulfide-bonded: C51–C63, C56–C67, and C61–C70.

This sequence belongs to the conotoxin M superfamily. As to expression, expressed by the venom duct.

Its subcellular location is the secreted. This is Conotoxin Cl9.1 from Californiconus californicus (California cone).